The primary structure comprises 250 residues: Heme oxygenase 2 (250 aa).

His-16 serves as a coordination point for heme b. Residues 228–250 (QDRPGSTEARSTAGHPITLMVGE) are disordered.

This sequence belongs to the heme oxygenase family. Homodimer.

It carries out the reaction heme b + 3 reduced [NADPH--hemoprotein reductase] + 3 O2 = biliverdin IXalpha + CO + Fe(2+) + 3 oxidized [NADPH--hemoprotein reductase] + 3 H2O + H(+). Its function is as follows. Catalyzes the opening of the heme ring with the release of iron. Key enzyme in the synthesis of the chromophoric part of the photosynthetic antennae. The polypeptide is Heme oxygenase 2 (pbsA2) (Synechocystis sp. (strain ATCC 27184 / PCC 6803 / Kazusa)).